The chain runs to 243 residues: Sarcospan (243 aa).

Residues 1 to 43 form a disordered region; that stretch reads MGKNKQPRGQQRQGGPPAADAAGPDDMEPKKGTGAPKECGEEE. The Cytoplasmic portion of the chain corresponds to 1–53; that stretch reads MGKNKQPRGQQRQGGPPAADAAGPDDMEPKKGTGAPKECGEEEPRTCCGCRFP. Over residues 7 to 24 the composition is skewed to low complexity; that stretch reads PRGQQRQGGPPAADAAGP. Residues 54-74 form a helical membrane-spanning segment; sequence LLLALLQLALGIAVTVVGFLM. At 75 to 86 the chain is on the extracellular side; that stretch reads ASISSSLLVRDT. The chain crosses the membrane as a helical span at residues 87–107; the sequence is PFWAGIIVCLVAYLGLFMLCV. Residues 108–122 are Cytoplasmic-facing; sequence SYQVDERTCIQFSMK. A helical membrane pass occupies residues 123-143; that stretch reads LLYFLLSALGLTVCVLAVAFA. Over 144–193 the chain is Extracellular; it reads AHHYSQLTQFTCETTLDSCQCKLPSSEPLSRTFVYRDVTDCTSVTGTFKL. Residues 194 to 214 traverse the membrane as a helical segment; the sequence is FLLIQMILNLVCGLVCLLACF. At 215-243 the chain is on the cytoplasmic side; that stretch reads VMWKHRYQVFYVGVRICSLTASEGPQQKI.

Isoform 1 is expressed exclusively in heart and skeletal muscle. Isoform 2 is expressed in heart, skeletal muscle, thymus, prostate, testis, ovary, small intestine, colon and spleen.

It localises to the cell membrane. The protein resides in the sarcolemma. The protein localises to the postsynaptic cell membrane. Functionally, component of the dystrophin-glycoprotein complex (DGC), a complex that spans the muscle plasma membrane and forms a link between the F-actin cytoskeleton and the extracellular matrix. Preferentially associates with the sarcoglycan subcomplex of the DGC. This Homo sapiens (Human) protein is Sarcospan (SSPN).